Reading from the N-terminus, the 467-residue chain is MLKVFNTATLKKEEFKPIVPGKITMYVCGPTVYNYIHVGNARSSIAFDTIRRYLLYRGYDVNFVSNFTDVDDKIINRAQEEGVSENAIASKYIKAFYEDTKPLNIIPATTRTRATEVIPDIIEFVSDLIDKGYAYESQGGVYFRVRKAGNYGLLAHENLEDLEVGASGRLDDGALALKEDPLDFALWKNEPRQVIKWDSPWGQGRPGWHIECSVMSTKYLGYTIDIHGGGIDLAFPHHTDEMAQSEAHTGKQFVHYWLHNGFVNVNNEKMSKSLGNFTTVHELLSSYDDPMAIRFLMTATHYRRPINYSSSELERARVELDRIRTAYRRLKNADFKIGDDPQIDQLVSKQTAAFVEAMDDDFNVANALAAIFELVRLANSYVDSGDVKDKSAQEILRQIAELIGVFGISGLETKKESLPKKIELLLKKRETARINKNWQQSDQLRDEIFSLGYKVSDSSNGQQVRKI.

C28 serves as a coordination point for Zn(2+). Positions 30-40 (PTVYNYIHVGN) match the 'HIGH' region motif. Zn(2+) contacts are provided by C212, H237, and E241. The short motif at 269-273 (KMSKS) is the 'KMSKS' region element. An ATP-binding site is contributed by K272.

This sequence belongs to the class-I aminoacyl-tRNA synthetase family. As to quaternary structure, monomer. Zn(2+) is required as a cofactor.

It localises to the cytoplasm. The catalysed reaction is tRNA(Cys) + L-cysteine + ATP = L-cysteinyl-tRNA(Cys) + AMP + diphosphate. This is Cysteine--tRNA ligase from Oenococcus oeni (strain ATCC BAA-331 / PSU-1).